A 547-amino-acid chain; its full sequence is Threonylcarbamoyladenosine tRNA methylthiotransferase (547 aa).

The disordered stretch occupies residues 30–51 (ARKSVVPRARKHKQETGEQMQT). The 109-residue stretch at 59–167 (QKVWLKTWGC…VVEVVDEAIK (109 aa)) folds into the MTTase N-terminal domain. [4Fe-4S] cluster is bound by residues cysteine 68, cysteine 104, cysteine 133, cysteine 209, cysteine 213, and cysteine 216. The region spanning 195-426 (RKNPLIEIIS…ALFHSYRPYD (232 aa)) is the Radical SAM core domain. The region spanning 426-488 (DHKMGEQQQV…KHYMKGRPLE (63 aa)) is the TRAM domain. A helical membrane pass occupies residues 527 to 547 (ILAVVLLLSAVLLALLMEKLL).

This sequence belongs to the methylthiotransferase family. CDKAL1 subfamily. Requires [4Fe-4S] cluster as cofactor.

It localises to the endoplasmic reticulum membrane. It catalyses the reaction N(6)-L-threonylcarbamoyladenosine(37) in tRNA + (sulfur carrier)-SH + AH2 + 2 S-adenosyl-L-methionine = 2-methylsulfanyl-N(6)-L-threonylcarbamoyladenosine(37) in tRNA + (sulfur carrier)-H + 5'-deoxyadenosine + L-methionine + A + S-adenosyl-L-homocysteine + 2 H(+). Catalyzes the methylthiolation of N6-threonylcarbamoyladenosine (t(6)A), leading to the formation of 2-methylthio-N6-threonylcarbamoyladenosine (ms(2)t(6)A) at position 37 in tRNAs that read codons beginning with adenine. In Danio rerio (Zebrafish), this protein is Threonylcarbamoyladenosine tRNA methylthiotransferase (cdkal1).